The following is a 170-amino-acid chain: Phosphopantetheine adenylyltransferase (170 aa).

Substrate is bound at residue Thr-17. ATP-binding positions include Thr-17–Phe-18 and His-25. Substrate-binding residues include Lys-49, Leu-81, and Arg-95. Residues Gly-96–Arg-98, Glu-106, and Leu-131–Thr-137 contribute to the ATP site.

This sequence belongs to the bacterial CoaD family. Homohexamer. Mg(2+) serves as cofactor.

The protein resides in the cytoplasm. It catalyses the reaction (R)-4'-phosphopantetheine + ATP + H(+) = 3'-dephospho-CoA + diphosphate. It functions in the pathway cofactor biosynthesis; coenzyme A biosynthesis; CoA from (R)-pantothenate: step 4/5. Its function is as follows. Reversibly transfers an adenylyl group from ATP to 4'-phosphopantetheine, yielding dephospho-CoA (dPCoA) and pyrophosphate. In Legionella pneumophila subsp. pneumophila (strain Philadelphia 1 / ATCC 33152 / DSM 7513), this protein is Phosphopantetheine adenylyltransferase.